Consider the following 239-residue polypeptide: IkB-like protein (239 aa).

4 ANK repeats span residues 48–77 (NKIT…YPGE), 87–116 (DGNS…KNGI), 124–153 (NGVT…NPNR), and 158–187 (KGFT…KPLF). The Nuclear localization signal signature appears at 81-87 (HYRRDKD). A Nuclear localization signal motif is present at residues 203-214 (KKKPKIIITGCE). The PxIxITxC motif; Interaction with host PPP3CA signature appears at 206-213 (PKIIITGC). Residues 228 to 231 (FLCV) carry the FLCV motif motif.

It belongs to the asfivirus A238L family. In terms of assembly, interacts with host PPIA. Interacts with host PPP3CA/Calcineurin. Interacts with host RELA/p65; interaction of the 32 kDa form with host RELA results in the formation of a stable complex with NF-kappa-B. Interacts with host PPP3R1. Interacts with host EP300; this interaction inhibits the association of host EP300 with host RELA, JUN and NFATC2. In terms of processing, the protein exists in a 28 kDa and a 32 kDa form, probably due to post-translational modifications which are neither phosphorylation, nor sumoylation.

It is found in the host nucleus. It localises to the host cytoplasm. Functionally, ikB-like protein that inhibits the binding of NF-kappa-B to DNA, thereby downregulating pro-inflammatory cytokine production. Forms a heterodimer with the NF-kappa-B subunit RELA/p65 and prevents the activation of the NF-kappa-B transcription factor. Inhibits calcineurin function, which is required for the induction of nuclear factor of activated T cells (NFAT)-dependent immune response genes. Prevents the binding of substrates to calcineurin without affecting the phosphatase activity. Does not contain the serine residues that are phosphorylated by host IkB kinase and thus is not degraded following stimulation of the NFkB pathway. This is IkB-like protein (A238L) from Ornithodoros (relapsing fever ticks).